A 117-amino-acid polypeptide reads, in one-letter code: Toxin CSTX-12 (117 aa).

The signal sequence occupies residues 1–20; that stretch reads MKVLVICAVLFLTIFSNSSA. Positions 21–47 are excised as a propeptide; that stretch reads ETEDDFLEDESFEADDVIPFLAREQVR. 4 disulfides stabilise this stretch: cysteine 50/cysteine 65, cysteine 57/cysteine 74, cysteine 64/cysteine 95, and cysteine 76/cysteine 93. Residues 82–87 constitute a propeptide that is removed on maturation; that stretch reads RSDTAR. Alanine amide is present on alanine 116.

The protein belongs to the neurotoxin 19 (CSTX) family. 12 subfamily. As to quaternary structure, heterodimer of A and B chains; disulfide-linked. Interacts with CSTX-1 (AC P81694), and with CSTX-9 (AC P58604). In terms of tissue distribution, expressed by the venom gland.

Its subcellular location is the secreted. It is found in the target cell membrane. In terms of biological role, synergistic toxin that induces or increases a cytolytic effect when combined with CSTX-1 (AC P81694) or CSTX-9 (AC P58604). When alone, has a weak insecticidal activity, with an unknown molecular target. The polypeptide is Toxin CSTX-12 (Cupiennius salei (American wandering spider)).